The primary structure comprises 278 residues: uncharacterized protein (278 aa).

10 helical membrane passes run 1–21 (MLEI…GIAY), 30–50 (AFTA…PLAL), 56–76 (VVID…SFYI), 92–112 (IALP…TVIY), 116–136 (LSLN…IIYG), 146–166 (LFYA…LDFL), 170–190 (LPVS…LSFT), 209–229 (GIFL…SSSW), 230–250 (NVVQ…AIFL), and 258–278 (LVAG…PPLQ). 2 EamA domains span residues 12–136 (ICWA…IIYG) and 154–274 (FSWA…LLLL).

This sequence belongs to the EamA transporter family.

The protein resides in the cell membrane. This is an uncharacterized protein from Archaeoglobus fulgidus (strain ATCC 49558 / DSM 4304 / JCM 9628 / NBRC 100126 / VC-16).